Here is a 218-residue protein sequence, read N- to C-terminus: GTP cyclohydrolase 1 (218 aa).

Zn(2+)-binding residues include C109, H112, and C180.

It belongs to the GTP cyclohydrolase I family. As to quaternary structure, toroid-shaped homodecamer, composed of two pentamers of five dimers.

The catalysed reaction is GTP + H2O = 7,8-dihydroneopterin 3'-triphosphate + formate + H(+). The protein operates within cofactor biosynthesis; 7,8-dihydroneopterin triphosphate biosynthesis; 7,8-dihydroneopterin triphosphate from GTP: step 1/1. This is GTP cyclohydrolase 1 from Haemophilus influenzae (strain 86-028NP).